A 358-amino-acid polypeptide reads, in one-letter code: Prostaglandin E2 receptor EP2 subtype (358 aa).

Residues 1–23 (MGNASNDSQSEDCETRQWLPPGE) lie on the Extracellular side of the membrane. N-linked (GlcNAc...) asparagine glycans are attached at residues asparagine 3 and asparagine 6. A helical transmembrane segment spans residues 24 to 47 (SPAISSVMFSAGVLGNLIALALLA). Topologically, residues 48–65 (RRWRGDVGCSAGRRSSLS) are cytoplasmic. Residues 66–91 (LFHVLVTELVFTDLLGTCLISPVVLA) form a helical membrane-spanning segment. Residues 92–111 (SYARNQTLVALAPESRACTY) are Extracellular-facing. An N-linked (GlcNAc...) asparagine glycan is attached at asparagine 96. Cysteines 109 and 187 form a disulfide. A helical membrane pass occupies residues 112 to 132 (FAFAMTFFSLATMLMLFAMAL). Residues 133–151 (ERYLSIGHPYFYQRRVSRS) are Cytoplasmic-facing. The chain crosses the membrane as a helical span at residues 152–176 (GGLAVLPVIYAVSLLFCSLPLLDYG). The Extracellular segment spans residues 177 to 198 (QYVQYCPGTWCFIRHGRTAYLQ). A helical transmembrane segment spans residues 199 to 223 (LYATLLLLLIVSVLACNFSVILNLI). Topologically, residues 224–262 (RMHRRSRRSRCGPSLGSGRGGPGARRRGERVSMAEETDH) are cytoplasmic. The tract at residues 231 to 253 (RSRCGPSLGSGRGGPGARRRGER) is disordered. The chain crosses the membrane as a helical span at residues 263–286 (LILLAIMTITFAVCSLPFTIFAYM). Asparagine 287 carries N-linked (GlcNAc...) asparagine glycosylation. Residues 287–299 (NETSSRKEKWDLQ) lie on the Extracellular side of the membrane. The helical transmembrane segment at 300-323 (ALRFLSINSIIDPWVFAILRPPVL) threads the bilayer. Residues 324-358 (RLMRSVLCCRISLRTQDATQTSCSTQSDASKQADL) are Cytoplasmic-facing.

Belongs to the G-protein coupled receptor 1 family. Placenta and lung.

The protein localises to the cell membrane. In terms of biological role, receptor for prostaglandin E2 (PGE2). The activity of this receptor is mediated by G(s) proteins that stimulate adenylate cyclase. The subsequent raise in intracellular cAMP is responsible for the relaxing effect of this receptor on smooth muscle. This is Prostaglandin E2 receptor EP2 subtype (PTGER2) from Homo sapiens (Human).